The following is a 422-amino-acid chain: Mitogen-activated protein kinase spm1 (422 aa).

The Protein kinase domain occupies 21–314 (FKVVKELGQG…VDDALEHPYL (294 aa)). Residues 27–35 (LGQGAYGIV) and Lys52 each bind ATP. Asp149 serves as the catalytic Proton acceptor. Phosphothreonine is present on Thr186. The TXY signature appears at 186–188 (TEY). A Phosphotyrosine modification is found at Tyr188. The segment at 359-422 (RRRSHPTNPT…DHKSDDNRHN (64 aa)) is disordered. Positions 364–379 (PTNPTVNIPQPAQTVP) are enriched in polar residues. The span at 380 to 397 (SNDNGSFNVSSSSSSQTS) shows a compositional bias: low complexity. Residues 411-422 (AIDHKSDDNRHN) are compositionally biased toward basic and acidic residues.

It belongs to the protein kinase superfamily. CMGC Ser/Thr protein kinase family. MAP kinase subfamily. It depends on Mg(2+) as a cofactor. In terms of processing, dually phosphorylated on Thr-186 and Tyr-188, which activates the enzyme.

It carries out the reaction L-seryl-[protein] + ATP = O-phospho-L-seryl-[protein] + ADP + H(+). The enzyme catalyses L-threonyl-[protein] + ATP = O-phospho-L-threonyl-[protein] + ADP + H(+). Activated by tyrosine and threonine phosphorylation by skh1/pek1. Its function is as follows. Regulates cell integrity and functions coordinately with the protein kinase C pathway (pck1 and pck2). Involved the regulation of wall architecture, cell shape, cytokinesis in exponential and stationary phase, and metabolism of ions. The protein is Mitogen-activated protein kinase spm1 (spm1) of Schizosaccharomyces pombe (strain 972 / ATCC 24843) (Fission yeast).